Here is a 476-residue protein sequence, read N- to C-terminus: MIQVLLVIICLADFPYQGTSIILESGNVNDYEVVYPRKVTALPKGAVQPKYEDAMQYEFKVNGEPVVLHLEKNKGLFSKGYSETHYSPDGRKITTNPPVEDHCYYHGRIQNDADSTASISACNGLKGHFKHQGEMYLIEPLKLSDSEAHAVYKYENVEKEDEAPKMCGVTQTNWKSDEPIKASQQQRFPQRYIELVVVADHGMFTKYDSNLDTIRTWVHELVNSINEFYRSLNIDVSLTELEIWSNQDLINVQSAAGDTLEAFGDWRETDLLNRISHDNAQLLTATELDGNTIGLAHVASMCDPKRSTGVVQDHSAINLLVAVTMAHETGHNLGMNHDGNQCHCGANSCVMGDVLSEGVSYEFSDCSENEYQTYLTDRNPQCILNEPLRTDTVSTPVSGNELLEAGKECDCGAPANPCCDAETCKLRPGQQCAEGLCCDQCRFMKEGTICQEAKGDWNDDTCNGISAGCPRNGFYG.

An N-terminal signal peptide occupies residues 1–20 (MIQVLLVIICLADFPYQGTS). A propeptide spanning residues 21–184 (IILESGNVND…KSDEPIKASQ (164 aa)) is cleaved from the precursor. The residue at position 185 (Gln-185) is a Pyrrolidone carboxylic acid. Residues 191-387 (RYIELVVVAD…RNPQCILNEP (197 aa)) enclose the Peptidase M12B domain. Glu-194 and Asp-278 together coordinate Ca(2+). 3 cysteine pairs are disulfide-bonded: Cys-302–Cys-382, Cys-342–Cys-366, and Cys-344–Cys-349. His-327 is a Zn(2+) binding site. Glu-328 is an active-site residue. Positions 331 and 337 each coordinate Zn(2+). Residues Cys-382 and Asn-385 each coordinate Ca(2+). A propeptide spanning residues 388 to 403 (LRTDTVSTPVSGNELL) is cleaved from the precursor. The Disintegrin domain occupies 395 to 476 (TPVSGNELLE…AGCPRNGFYG (82 aa)). Cystine bridges form between Cys-409–Cys-424, Cys-411–Cys-419, Cys-418–Cys-441, Cys-432–Cys-438, Cys-437–Cys-462, and Cys-450–Cys-469. The Cell attachment site signature appears at 454–456 (KGD).

It belongs to the venom metalloproteinase (M12B) family. P-II subfamily. P-IId sub-subfamily. In terms of assembly, homodimer; disulfide-linked (disintegrin). The cofactor is Zn(2+). Expressed by the venom gland.

The protein localises to the secreted. The metalloproteinase is inhibited by EDTA, o-phenanthroline, and cysteine. Glutathione does not inhibit the enzymatic activity. Its function is as follows. Shows weak degradation of alpha-fibrinogen, but has no activity on beta- and gamma-chains. Digests luteinizing hormone-releasing hormone (LH-RH) and oxidized insulin at X-Leu, X-Phe, and X-Val bonds as well as X-His bond. Does not show fibrinogen-clotting activity. Does not show hemorrhagic activity. Inhibits ADP-induced platelet aggregation. This Gloydius brevicauda (Korean slamosa snake) protein is Zinc metalloproteinase/disintegrin.